We begin with the raw amino-acid sequence, 596 residues long: Elongation factor 4 (596 aa).

A tr-type G domain is found at 2 to 183 (ENIRNFCIIA…AIIQRIPPPK (182 aa)). Residues 14 to 19 (DHGKST) and 130 to 133 (NKID) contribute to the GTP site.

Belongs to the TRAFAC class translation factor GTPase superfamily. Classic translation factor GTPase family. LepA subfamily.

It is found in the cell inner membrane. The catalysed reaction is GTP + H2O = GDP + phosphate + H(+). In terms of biological role, required for accurate and efficient protein synthesis under certain stress conditions. May act as a fidelity factor of the translation reaction, by catalyzing a one-codon backward translocation of tRNAs on improperly translocated ribosomes. Back-translocation proceeds from a post-translocation (POST) complex to a pre-translocation (PRE) complex, thus giving elongation factor G a second chance to translocate the tRNAs correctly. Binds to ribosomes in a GTP-dependent manner. The sequence is that of Elongation factor 4 from Cytophaga hutchinsonii (strain ATCC 33406 / DSM 1761 / CIP 103989 / NBRC 15051 / NCIMB 9469 / D465).